The following is a 908-amino-acid chain: Glutamate receptor ionotropic, kainate 2 (908 aa).

The first 31 residues, 1-31, serve as a signal peptide directing secretion; it reads MKIIFPILSNPVFRRTVKLLLCLLWIGYSQG. The Extracellular segment spans residues 32–561; the sequence is TTHVLRFGGI…VFSFLNPLSP (530 aa). N-linked (GlcNAc...) asparagine glycosylation is found at Asn-67, Asn-73, Asn-275, Asn-378, Asn-412, Asn-423, and Asn-430. Cys-96 and Cys-347 are oxidised to a cystine. 3 residues coordinate L-glutamate: Pro-516, Ala-518, and Arg-523. Residue Asn-546 is glycosylated (N-linked (GlcNAc...) asparagine). Residues 562–582 form a helical membrane-spanning segment; that stretch reads DIWMYILLAYLGVSCVLFVIA. Over 583–635 the chain is Cytoplasmic; the sequence is RFSPYEWYNPHPCNPDSDVVENNFTLLNSFWFGVGALMQQGSELMPKALSTRI. The helical transmembrane segment at 636–656 threads the bilayer; the sequence is VGGIWWFFTLIIISSYTANLA. Over 657-819 the chain is Extracellular; the sequence is AFLTVERMES…KEASALGVQN (163 aa). 3 residues coordinate L-glutamate: Ala-689, Thr-690, and Glu-738. An intrachain disulfide couples Cys-750 to Cys-804. A glycan (N-linked (GlcNAc...) asparagine) is linked at Asn-751. A helical transmembrane segment spans residues 820-840; it reads IGGIFIVLAAGLVLSVFVAVG. At 841–908 the chain is on the cytoplasmic side; it reads EFLYKSKKNA…RRLPGKETMA (68 aa). Residues Ser-846 and Ser-868 each carry the phosphoserine; by PKC modification. Lys-886 participates in a covalent cross-link: Glycyl lysine isopeptide (Lys-Gly) (interchain with G-Cter in SUMO1).

Belongs to the glutamate-gated ion channel (TC 1.A.10.1) family. GRIK2 subfamily. Homotetramer and heterotetramer with GRIK5. Tetramers may be formed by the dimerization of dimers. Assembles into a kainate-gated homomeric channel that does not bind AMPA. Can form functional heteromeric receptors with GRIK5. Can form functional heteromeric receptors with GRIK3 and GRIK4. Interacts with DLG4. Interacts with NETO2. Interacts (via C-terminus) with KLHL17 (via kelch repeats); the interaction targets GRIK2 for degradation via ubiquitin-proteasome pathway. In terms of processing, sumoylation mediates kainate receptor-mediated endocytosis and regulates synaptic transmission. Sumoylation is enhanced by PIAS3 and desumoylated by SENP1. Post-translationally, ubiquitinated. Ubiquitination regulates the GRIK2 levels at the synapse by leading kainate receptor degradation through proteasome. Phosphorylated by PKC at Ser-868 upon agonist activation, this directly enhance sumoylation. Expression is higher in cerebellum than in cerebral cortex.

It localises to the cell membrane. The protein localises to the postsynaptic cell membrane. It catalyses the reaction Ca(2+)(in) = Ca(2+)(out). It carries out the reaction Na(+)(in) = Na(+)(out). Cold receptor activity activated by temperatures between 10-19 degrees Celsius. Its function is as follows. Ionotropic glutamate receptor that functions as a cation permeable ligand-gated ion channel, gated by L-glutamate and the glutamatergic agonist kainic acid. L-glutamate acts as an excitatory neurotransmitter at many synapses in the central nervous system. Binding of the excitatory neurotransmitter L-glutamate induces a conformation change, leading to the opening of the cation channel, and thereby converts the chemical signal to an electrical impulse. The receptor then desensitizes rapidly and enters a transient inactive state, characterized by the presence of bound agonist. Modulates cell surface expression of NETO2. In association with GRIK3, involved in presynaptic facilitation of glutamate release at hippocampal mossy fiber synapses. Independent of its ionotropic glutamate receptor activity, acts as a thermoreceptor conferring sensitivity to cold temperatures. Functions in dorsal root ganglion neurons. The polypeptide is Glutamate receptor ionotropic, kainate 2 (GRIK2) (Homo sapiens (Human)).